Here is a 164-residue protein sequence, read N- to C-terminus: Small ribosomal subunit protein uS5 (164 aa).

One can recognise an S5 DRBM domain in the interval 9 to 72 (YQEKLLKISR…AAAKKNIVKI (64 aa)).

It belongs to the universal ribosomal protein uS5 family. In terms of assembly, part of the 30S ribosomal subunit. Contacts proteins S4 and S8.

Functionally, with S4 and S12 plays an important role in translational accuracy. In terms of biological role, located at the back of the 30S subunit body where it stabilizes the conformation of the head with respect to the body. This chain is Small ribosomal subunit protein uS5, found in Fusobacterium nucleatum subsp. nucleatum (strain ATCC 25586 / DSM 15643 / BCRC 10681 / CIP 101130 / JCM 8532 / KCTC 2640 / LMG 13131 / VPI 4355).